Consider the following 317-residue polypeptide: Nuclear distribution protein nudE homolog (317 aa).

The stretch at 29–180 (TDVKQEYDEF…LKQELNVKSR (152 aa)) forms a coiled coil. Residues 186–205 (NGTSVPTANDTNTVNSSMNS) are disordered.

The protein belongs to the nudE family.

The protein resides in the cytoplasm. It is found in the cytoskeleton. The protein localises to the microtubule organizing center. Its subcellular location is the centrosome. It localises to the spindle. Chaperone protein with functions in nuclear localization. Required for centrosome duplication and formation and function of the mitotic spindle. In postmitotic neurons, acts with nudC downstream of dar1 to ensure correct positioning of the nuclei in primary dendrites and as a consequence, is required for determining multipolar neuron morphology. This Drosophila melanogaster (Fruit fly) protein is Nuclear distribution protein nudE homolog.